We begin with the raw amino-acid sequence, 266 residues long: Heat-inducible transcription repressor HrcA (266 aa).

The protein belongs to the HrcA family.

In terms of biological role, negative regulator of class I heat shock genes (grpE-dnaK-dnaJ and groELS operons). Prevents heat-shock induction of these operons. This is Heat-inducible transcription repressor HrcA from Helicobacter pylori (strain J99 / ATCC 700824) (Campylobacter pylori J99).